A 355-amino-acid chain; its full sequence is Uroporphyrinogen decarboxylase (355 aa).

Residues 27–31 (RQAGR), Asp-78, Tyr-155, Ser-210, and His-328 contribute to the substrate site.

Belongs to the uroporphyrinogen decarboxylase family. In terms of assembly, homodimer.

The protein resides in the cytoplasm. It catalyses the reaction uroporphyrinogen III + 4 H(+) = coproporphyrinogen III + 4 CO2. The protein operates within porphyrin-containing compound metabolism; protoporphyrin-IX biosynthesis; coproporphyrinogen-III from 5-aminolevulinate: step 4/4. Its function is as follows. Catalyzes the decarboxylation of four acetate groups of uroporphyrinogen-III to yield coproporphyrinogen-III. The protein is Uroporphyrinogen decarboxylase of Pseudomonas fluorescens (strain ATCC BAA-477 / NRRL B-23932 / Pf-5).